The primary structure comprises 462 residues: Gamma-glutamylethanolamide synthetase GlnA4 (462 aa).

The 97-residue stretch at 30–126 (GDIDTVVLAF…AVADLAWEDG (97 aa)) folds into the GS beta-grasp domain. One can recognise a GS catalytic domain in the interval 133-462 (PRQILRRQLE…WELRRSFERM (330 aa)). Mg(2+)-binding residues include Glu156 and Glu158. Glu214 contributes to the ATP binding site. Mg(2+) contacts are provided by Glu219 and Glu226. Gly270 is an L-glutamate binding site. His274 lines the Mg(2+) pocket. Residue 276 to 278 (HLS) participates in ATP binding. The L-glutamate site is built by Arg325 and Arg343. Positions 343 and 348 each coordinate ATP. Glu359 contacts Mg(2+). Arg361 provides a ligand contact to L-glutamate.

The protein belongs to the glutamine synthetase family. Mg(2+) is required as a cofactor.

The catalysed reaction is ethanolamine + L-glutamate + ATP = gamma-L-glutamylethanolamide + ADP + phosphate + H(+). Its pathway is amine and polyamine degradation; ethanolamine degradation. With respect to regulation, very slightly decreased activity with glutamine synthetase (GS) inhibitor methionine sulfoximine (MSO). In terms of biological role, involved in the catabolism of monoamine ethanolamine. Catalyzes the ATP-dependent gamma-glutamylation of ethanolamine. No activity with polyamines. No complementation of the L-glutamine auxotrophy of an E.coli glnA mutant. Enables survival of S.coelicolor under high local environmental ethanolamine conditions. May play a role during starvation conditions to limit intracellular ethanolamine concentration, which in excess is toxic to the cells. This chain is Gamma-glutamylethanolamide synthetase GlnA4, found in Streptomyces coelicolor (strain ATCC BAA-471 / A3(2) / M145).